The chain runs to 42 residues: MEPVDPNLEPWNHPGSQPKTACNQCYCKKCSYHCLVCFLTKA.

The segment at 1–24 is interaction with human CREBBP; the sequence is MEPVDPNLEPWNHPGSQPKTACNQ. Residues 22–37 are cysteine-rich; it reads CNQCYCKKCSYHCLVC. K28 carries the post-translational modification N6-acetyllysine; by host PCAF.

This sequence belongs to the lentiviruses Tat family. Interacts with host CCNT1. Associates with the P-TEFb complex composed at least of Tat, P-TEFb (CDK9 and CCNT1), TAR RNA, RNA Pol II. Recruits the HATs CREBBP, TAF1/TFIID, EP300, PCAF and GCN5L2. Interacts with host KAT5/Tip60; this interaction targets the latter to degradation. Interacts with the host deacetylase SIRT1. Interacts with host capping enzyme RNGTT; this interaction stimulates RNGTT. Binds to host KDR, and to the host integrins ITGAV/ITGB3 and ITGA5/ITGB1. Interacts with host KPNB1/importin beta-1 without previous binding to KPNA1/importin alpha-1. Interacts with EIF2AK2. Interacts with host nucleosome assembly protein NAP1L1; this interaction may be required for the transport of Tat within the nucleus, since the two proteins interact at the nuclear rim. Interacts with host C1QBP/SF2P32; this interaction involves lysine-acetylated Tat. Interacts with the host chemokine receptors CCR2, CCR3 and CXCR4. Interacts with host DPP4/CD26; this interaction may trigger an anti-proliferative effect. Interacts with host LDLR. Interacts with the host extracellular matrix metalloproteinase MMP1. Interacts with host PRMT6; this interaction mediates Tat's methylation. Interacts with, and is ubiquitinated by MDM2/Hdm2. Interacts with host PSMC3 and HTATIP2. Interacts with STAB1; this interaction may overcome SATB1-mediated repression of IL2 and IL2RA (interleukin) in T cells by binding to the same domain than HDAC1. Interacts (when acetylated) with human CDK13, thereby increasing HIV-1 mRNA splicing and promoting the production of the doubly spliced HIV-1 protein Nef. Interacts with host TBP; this interaction modulates the activity of transcriptional pre-initiation complex. Interacts with host RELA. Interacts with host PLSCR1; this interaction negatively regulates Tat transactivation activity by altering its subcellular distribution. In terms of processing, phosphorylated by EIF2AK2 on serine and threonine residues adjacent to the basic region important for TAR RNA binding and function. Phosphorylation of Tat by EIF2AK2 is dependent on the prior activation of EIF2AK2 by dsRNA. Post-translationally, asymmetrical arginine methylation by host PRMT6 seems to diminish the transactivation capacity of Tat and affects the interaction with host CCNT1. Polyubiquitination by host MDM2 does not target Tat to degradation, but activates its transactivation function and fosters interaction with CCNT1 and TAR RNA.

It is found in the host nucleus. It localises to the host nucleolus. The protein localises to the host cytoplasm. The protein resides in the secreted. In terms of biological role, transcriptional activator that increases RNA Pol II processivity, thereby increasing the level of full-length viral transcripts. Recognizes a hairpin structure at the 5'-LTR of the nascent viral mRNAs referred to as the transactivation responsive RNA element (TAR) and recruits the cyclin T1-CDK9 complex (P-TEFb complex) that will in turn hyperphosphorylate the RNA polymerase II to allow efficient elongation. The CDK9 component of P-TEFb and other Tat-activated kinases hyperphosphorylate the C-terminus of RNA Pol II that becomes stabilized and much more processive. Other factors such as HTATSF1/Tat-SF1, SUPT5H/SPT5, and HTATIP2 are also important for Tat's function. Besides its effect on RNA Pol II processivity, Tat induces chromatin remodeling of proviral genes by recruiting the histone acetyltransferases (HATs) CREBBP, EP300 and PCAF to the chromatin. This also contributes to the increase in proviral transcription rate, especially when the provirus integrates in transcriptionally silent region of the host genome. To ensure maximal activation of the LTR, Tat mediates nuclear translocation of NF-kappa-B by interacting with host RELA. Through its interaction with host TBP, Tat may also modulate transcription initiation. Tat can reactivate a latently infected cell by penetrating in it and transactivating its LTR promoter. In the cytoplasm, Tat is thought to act as a translational activator of HIV-1 mRNAs. Its function is as follows. Extracellular circulating Tat can be endocytosed by surrounding uninfected cells via the binding to several surface receptors such as CD26, CXCR4, heparan sulfate proteoglycans (HSPG) or LDLR. Neurons are rarely infected, but they internalize Tat via their LDLR. Through its interaction with nuclear HATs, Tat is potentially able to control the acetylation-dependent cellular gene expression. Modulates the expression of many cellular genes involved in cell survival, proliferation or in coding for cytokines or cytokine receptors. Tat plays a role in T-cell and neurons apoptosis. Tat induced neurotoxicity and apoptosis probably contribute to neuroAIDS. Circulating Tat also acts as a chemokine-like and/or growth factor-like molecule that binds to specific receptors on the surface of the cells, affecting many cellular pathways. In the vascular system, Tat binds to ITGAV/ITGB3 and ITGA5/ITGB1 integrins dimers at the surface of endothelial cells and competes with bFGF for heparin-binding sites, leading to an excess of soluble bFGF. The chain is Protein Tat from Human immunodeficiency virus type 1 group M subtype C (isolate ETH2220) (HIV-1).